A 207-amino-acid chain; its full sequence is Outer-membrane lipoprotein carrier protein (207 aa).

The N-terminal stretch at 1–21 (MRAIRMLLVSALALGTVTAYA) is a signal peptide.

This sequence belongs to the LolA family. Monomer.

The protein resides in the periplasm. In terms of biological role, participates in the translocation of lipoproteins from the inner membrane to the outer membrane. Only forms a complex with a lipoprotein if the residue after the N-terminal Cys is not an aspartate (The Asp acts as a targeting signal to indicate that the lipoprotein should stay in the inner membrane). This chain is Outer-membrane lipoprotein carrier protein, found in Pseudomonas putida (strain GB-1).